Here is a 387-residue protein sequence, read N- to C-terminus: Eukaryotic translation initiation factor 3 subunit M (387 aa).

Positions 181 to 340 (LSSKVMIELL…RKVHISSTMH (160 aa)) constitute a PCI domain.

This sequence belongs to the eIF-3 subunit M family. Component of the eukaryotic translation initiation factor 3 (eIF-3) complex. The eIF-3 complex interacts with pix.

It localises to the cytoplasm. The protein localises to the golgi apparatus. In terms of biological role, component of the eukaryotic translation initiation factor 3 (eIF-3) complex, which is involved in protein synthesis of a specialized repertoire of mRNAs and, together with other initiation factors, stimulates binding of mRNA and methionyl-tRNAi to the 40S ribosome. The eIF-3 complex specifically targets and initiates translation of a subset of mRNAs involved in cell proliferation. This Drosophila grimshawi (Hawaiian fruit fly) protein is Eukaryotic translation initiation factor 3 subunit M.